The following is a 218-amino-acid chain: Small ribosomal subunit protein uS3c (218 aa).

The region spanning 47–118 (VQKNIRISSG…KLNIAITRIT (72 aa)) is the KH type-2 domain.

It belongs to the universal ribosomal protein uS3 family. As to quaternary structure, part of the 30S ribosomal subunit.

The protein resides in the plastid. It is found in the chloroplast. The sequence is that of Small ribosomal subunit protein uS3c (rps3) from Vitis vinifera (Grape).